A 370-amino-acid chain; its full sequence is Spermidine/putrescine import ATP-binding protein PotA 1 (370 aa).

One can recognise an ABC transporter domain in the interval 12-250 (VSIRAVRKVY…PGNRFVADFI (239 aa)). 48–55 (GPSGCGKT) contacts ATP.

This sequence belongs to the ABC transporter superfamily. Spermidine/putrescine importer (TC 3.A.1.11.1) family. In terms of assembly, the complex is composed of two ATP-binding proteins (PotA), two transmembrane proteins (PotB and PotC) and a solute-binding protein (PotD).

It is found in the cell inner membrane. The catalysed reaction is ATP + H2O + polyamine-[polyamine-binding protein]Side 1 = ADP + phosphate + polyamineSide 2 + [polyamine-binding protein]Side 1.. In terms of biological role, part of the ABC transporter complex PotABCD involved in spermidine/putrescine import. Responsible for energy coupling to the transport system. The chain is Spermidine/putrescine import ATP-binding protein PotA 1 from Pseudomonas aeruginosa (strain ATCC 15692 / DSM 22644 / CIP 104116 / JCM 14847 / LMG 12228 / 1C / PRS 101 / PAO1).